The following is a 624-amino-acid chain: Anti-CBASS protein Acb1 (624 aa).

Tyrosine 106 contacts 3',3'-cGAMP. Tyrosine 106 is a 3',3'-cUAMP binding site. Residues histidine 503, threonine 505, histidine 581, and threonine 583 contribute to the active site. Tryptophan 617 contributes to the 3',3'-cGAMP binding site. Tryptophan 617 contributes to the 3',3'-cUAMP binding site.

It belongs to the anti-CBASS protein Acb1 family.

It catalyses the reaction 3',3'-cUAMP + H2O = U[3'-5']pAp[3'] + H(+). The catalysed reaction is 3',3',3'-c-tri-AMP + H2O = A[3'-5']pA[3'-5']pAp[3'] + H(+). The enzyme catalyses 3',3',3'-cAAG + H2O = G[3'-5']pA[3'-5']pAp[3'] + H(+). It carries out the reaction 3',3',3'-cAAG + H2O = A[3'-5']pG[3'-5']pAp[3'] + H(+). It catalyses the reaction 3',3'-cGAMP + H2O = G[3'-5']pAp[3'] + H(+). In terms of biological role, counteracts or regulates the endogenous CBASS antiviral defense system. Phosphodiesterase that enables metal-independent hydrolysis of the host cyclic di- and trinucleotide CBASS signals such as 3'3'-cGAMP, 3'3'cUA, and 3'3'3'-cAAA. The protein is Anti-CBASS protein Acb1 of Sphingomonas paeninsulae.